Reading from the N-terminus, the 417-residue chain is 2-oxoglutarate and iron-dependent oxygenase JMJD4 (417 aa).

The 160-residue stretch at 142-301 (CRDFPVEDVF…NMWRFLQQEL (160 aa)) folds into the JmjC domain. 3 residues coordinate Fe cation: H189, D191, and H269.

The protein belongs to the JMJD6 family. In terms of assembly, interacts with ETF1. Interacts with the ETF1-GSPT1 complex. Fe(2+) serves as cofactor.

It is found in the cytoplasm. It catalyses the reaction L-lysyl-[protein] + 2-oxoglutarate + O2 = 4-hydroxy-L-lysyl-[protein] + succinate + CO2. Catalyzes the 2-oxoglutarate and iron-dependent C4-lysyl hydroxylation of ETF1 at 'Lys-63' thereby promoting the translational termination efficiency of ETF1. The sequence is that of 2-oxoglutarate and iron-dependent oxygenase JMJD4 (JMJD4) from Homo sapiens (Human).